The primary structure comprises 107 residues: Urease subunit beta (107 aa).

It belongs to the urease beta subunit family. Heterotrimer of UreA (gamma), UreB (beta) and UreC (alpha) subunits. Three heterotrimers associate to form the active enzyme.

The protein resides in the cytoplasm. It carries out the reaction urea + 2 H2O + H(+) = hydrogencarbonate + 2 NH4(+). The protein operates within nitrogen metabolism; urea degradation; CO(2) and NH(3) from urea (urease route): step 1/1. The protein is Urease subunit beta of Janthinobacterium sp. (strain Marseille) (Minibacterium massiliensis).